The chain runs to 328 residues: Cytochrome c biogenesis protein CcsA (328 aa).

The next 8 membrane-spanning stretches (helical) occupy residues 12-32, 45-65, 72-92, 100-120, 145-165, 234-254, 263-283, and 296-316; these read HISF…LLLG, GMII…IFSG, LYES…VLCL, FNTI…SGLL, MILG…ILVI, TISL…VWAN, WDPK…YLHI, and IVAS…NLLG.

Belongs to the CcmF/CycK/Ccl1/NrfE/CcsA family. In terms of assembly, may interact with Ccs1.

The protein resides in the plastid. Its subcellular location is the chloroplast thylakoid membrane. Functionally, required during biogenesis of c-type cytochromes (cytochrome c6 and cytochrome f) at the step of heme attachment. The polypeptide is Cytochrome c biogenesis protein CcsA (Phaseolus vulgaris (Kidney bean)).